A 451-amino-acid polypeptide reads, in one-letter code: Probable glycine dehydrogenase (decarboxylating) subunit 1 (451 aa).

The protein belongs to the GcvP family. N-terminal subunit subfamily. As to quaternary structure, the glycine cleavage system is composed of four proteins: P, T, L and H. In this organism, the P 'protein' is a heterodimer of two subunits.

The enzyme catalyses N(6)-[(R)-lipoyl]-L-lysyl-[glycine-cleavage complex H protein] + glycine + H(+) = N(6)-[(R)-S(8)-aminomethyldihydrolipoyl]-L-lysyl-[glycine-cleavage complex H protein] + CO2. Functionally, the glycine cleavage system catalyzes the degradation of glycine. The P protein binds the alpha-amino group of glycine through its pyridoxal phosphate cofactor; CO(2) is released and the remaining methylamine moiety is then transferred to the lipoamide cofactor of the H protein. The chain is Probable glycine dehydrogenase (decarboxylating) subunit 1 from Thermococcus kodakarensis (strain ATCC BAA-918 / JCM 12380 / KOD1) (Pyrococcus kodakaraensis (strain KOD1)).